The chain runs to 767 residues: Cilia- and flagella-associated protein 91 (767 aa).

Residues 1–29 (MSHAVTIEEPQAQPQVSQTRYRERSRAGS) are disordered.

This sequence belongs to the CFAP91 family. As to quaternary structure, interacts with MYCBP and AKAP1. Part of a complex containing MYCBP, AKAP1 and PRKAR2B. Interacts with CFAP61. In terms of assembly, does not interact with MYCBP. In terms of processing, phosphorylated by PKA. As to expression, strongly expressed in the liver. In terms of tissue distribution, widely expressed, but strongly expressed in all spermatogenesis-related tissues, including the testis, the epithelium of cauda and the corpus epididymis, as well as the spermatid and mature sperm. Also expressed in Leydig cells.

The protein localises to the mitochondrion. It localises to the cytoplasm. The protein resides in the cytoskeleton. It is found in the cilium axoneme. Its function is as follows. Involved in sperm flagellum axonemal organization and function. May regulate cilium motility through its role in the assembly of the axonemal radial spokes. The chain is Cilia- and flagella-associated protein 91 from Homo sapiens (Human).